Here is a 559-residue protein sequence, read N- to C-terminus: MRKFAYCKVVLATSLIWVLLDMFLLLYFSECNKCDEKKERGLPAGDVLEPVQKPHEGPGEMGKPVVIPKEDQDKMKEMFKINQFNLMASEMIALNRSLPDVRLEGCKTKVYPDNLPTTSVVIVFHNEAWSTLLRTVHSVINRSPRHMLEEIVLVDDASERDFLKRPLESYVKKLKVPVHVIRMEQRSGLIRARLKGAAVSKGQVITFLDAHCECTVGWLEPLLARIKHDRKTVVCPIIDVISDDTFEYMAGSDMTYGGFNWKLNFRWYPVPQREMDRRKGDRTLPVRTPTMAGGLFSIDRDYFQEIGTYDAGMDIWGGENLEISFRIWQCGGTLEIVTCSHVGHVFRKATPYTFPGGTGQIINKNNRRLAEVWMDEFKTFFYIISPGVTKVDYGDISSRLGLRHKLQCRPFSWYLENIYPDSQIPRHYSSLGEIRNVETNQCLDNMARKENEKVGIFNCHGMGGNQVFSYTANKEIRTDDLCLDVSKLNGPVTMLKCHHLKGNQLWEYDPVKLTLQHVNSNQCLDKATEEDSQVPSIRDCSGSRSQQWLLRNVTLPEIF.

Residues 1-8 (MRKFAYCK) are Cytoplasmic-facing. A helical; Signal-anchor for type II membrane protein membrane pass occupies residues 9-28 (VVLATSLIWVLLDMFLLLYF). Residues 29-559 (SECNKCDEKK…LRNVTLPEIF (531 aa)) lie on the Lumenal side of the membrane. The segment at 45 to 66 (GDVLEPVQKPHEGPGEMGKPVV) is disordered. Asparagine 95 is a glycosylation site (N-linked (GlcNAc...) asparagine). 5 disulfides stabilise this stretch: cysteine 106–cysteine 339, cysteine 330–cysteine 408, cysteine 442–cysteine 459, cysteine 482–cysteine 497, and cysteine 523–cysteine 540. The interval 115 to 225 (LPTTSVVIVF…VGWLEPLLAR (111 aa)) is catalytic subdomain A. Substrate contacts are provided by aspartate 156 and arginine 186. Residues aspartate 209 and histidine 211 each contribute to the Mn(2+) site. Residues 285–347 (PVRTPTMAGG…TCSHVGHVFR (63 aa)) are catalytic subdomain B. Residue tryptophan 316 participates in substrate binding. A Mn(2+)-binding site is contributed by histidine 344. Substrate-binding residues include arginine 347 and tyrosine 352. A Ricin B-type lectin domain is found at 429 to 551 (SSLGEIRNVE…GSRSQQWLLR (123 aa)). Asparagine 552 carries an N-linked (GlcNAc...) asparagine glycan.

It belongs to the glycosyltransferase 2 family. GalNAc-T subfamily. Mn(2+) is required as a cofactor.

The protein localises to the golgi apparatus. The protein resides in the golgi stack membrane. It localises to the secreted. The catalysed reaction is L-seryl-[protein] + UDP-N-acetyl-alpha-D-galactosamine = a 3-O-[N-acetyl-alpha-D-galactosaminyl]-L-seryl-[protein] + UDP + H(+). The enzyme catalyses L-threonyl-[protein] + UDP-N-acetyl-alpha-D-galactosamine = a 3-O-[N-acetyl-alpha-D-galactosaminyl]-L-threonyl-[protein] + UDP + H(+). It participates in protein modification; protein glycosylation. Catalyzes the initial reaction in O-linked oligosaccharide biosynthesis, the transfer of an N-acetyl-D-galactosamine residue to a serine or threonine residue on the protein receptor. Has a broad spectrum of substrates such as apomucin-, MUC5AC-, MUC1- and MUC2-derived peptides. This Sus scrofa (Pig) protein is Polypeptide N-acetylgalactosaminyltransferase 1.